A 511-amino-acid chain; its full sequence is Lysine--tRNA ligase 2 (511 aa).

Polar residues predominate over residues 1–11; that stretch reads MTMEINNTDPS. The tract at residues 1–21 is disordered; sequence MTMEINNTDPSENMPLPDDVD. Positions 421 and 428 each coordinate Mg(2+).

Belongs to the class-II aminoacyl-tRNA synthetase family. As to quaternary structure, homodimer. The cofactor is Mg(2+).

The protein resides in the cytoplasm. The enzyme catalyses tRNA(Lys) + L-lysine + ATP = L-lysyl-tRNA(Lys) + AMP + diphosphate. This Methanosarcina acetivorans (strain ATCC 35395 / DSM 2834 / JCM 12185 / C2A) protein is Lysine--tRNA ligase 2.